A 137-amino-acid polypeptide reads, in one-letter code: Small ribosomal subunit protein bS18c (137 aa).

It belongs to the bacterial ribosomal protein bS18 family. Part of the 30S ribosomal subunit.

It localises to the plastid. The protein localises to the chloroplast. This Chlamydomonas reinhardtii (Chlamydomonas smithii) protein is Small ribosomal subunit protein bS18c (rps18).